The primary structure comprises 573 residues: PCNA-interacting partner (573 aa).

Positions 492-532 (TGGQVKNKPCKNVANKRSKRKQVDIQSETTNAQENEPPQKK) are disordered. Positions 515–527 (DIQSETTNAQENE) are enriched in polar residues.

This sequence belongs to the PARI family.

It localises to the cytoplasm. The protein localises to the nucleus. In terms of biological role, required to suppress inappropriate homologous recombination, thereby playing a central role DNA repair and in the maintenance of genomic stability. This Xenopus tropicalis (Western clawed frog) protein is PCNA-interacting partner (parpbp).